The chain runs to 174 residues: Gamma-crystallin D (174 aa).

2 consecutive Beta/gamma crystallin 'Greek key' domains span residues 2 to 40 and 41 to 83; these read GKIT…RVDS and GCWM…RIIP. The tract at residues 84-87 is connecting peptide; the sequence is YSGS. 2 Beta/gamma crystallin 'Greek key' domains span residues 88–128 and 129–171; these read HKMR…NVLD and GCWI…RRVI.

The protein belongs to the beta/gamma-crystallin family. As to quaternary structure, monomer.

Functionally, crystallins are the dominant structural components of the vertebrate eye lens. This chain is Gamma-crystallin D (CRYGD), found in Macropus fuliginosus (Western gray kangaroo).